Consider the following 536-residue polypeptide: Cytoplasmic dynein 2 intermediate chain 2 (536 aa).

Ser15 bears the Phosphoserine mark. Residues 80–93 form a DYNLL2 binding region; it reads RNHVDAQVQTEAPV. Residues 106 to 131 form a DYNLRB1 binding region; sequence PRLAAFLRRVEAMVIRELNKNWQSHA. WD repeat units follow at residues 215-255, 264-308, 390-430, 433-473, and 480-520; these read EVPS…DPLL, THTD…QLQL, PHGG…PLTS, LSLK…QKPT, and QDES…TEQG.

It belongs to the dynein light intermediate chain family. In terms of assembly, the cytoplasmic dynein 2 complex consists of two catalytic heavy chains (HCs) and a number of non-catalytic subunits presented by intermediate chains (ICs), light intermediate chains (LICs) and light chains (LCs). Among them, a heavy chain (DYNC2H1), two intermediate chains (DYNC2I2 and DYNC2I1), a light intermediate chain (DYNC2LI1), and a light chain (DYNLT2B) are unique to the cytoplasmic dynein complex 2, but a subset of the light chains are also shared by dynein-1 and dynein-2 complexes. Interacts with DYNC2I1; their C-terminal domains each bind a copy of the heavy chain, and their extended N-terminal regions are held together by an array of light chain dimers. Interacts with DYNLL2; this interaction is essential for dynein-2-mediated retrograde trafficking of ciliary proteins. Interacts with DYNLRB1; this interaction is essential for dynein-2-mediated retrograde trafficking of ciliary proteins. Interacts (via the WD domains) with MAP3K7 and TAB3. Interacts (via WD domains) with TAB2 (via C-terminus). Interacts (via WD domains) with TRAF6 (via TRAF-type domains). In terms of tissue distribution, expressed in several cell lines (at protein level).

It is found in the cytoplasm. The protein resides in the cytoskeleton. Its subcellular location is the cilium basal body. The protein localises to the cilium axoneme. It localises to the microtubule organizing center. It is found in the centrosome. The protein resides in the cell projection. Its subcellular location is the cilium. The protein localises to the filopodium. Its function is as follows. Acts as one of several non-catalytic accessory components of the cytoplasmic dynein 2 complex (dynein-2 complex), a motor protein complex that drives the movement of cargos along microtubules within cilia and flagella in concert with the intraflagellar transport (IFT) system. DYNC2I2 plays a major role in retrograde ciliary protein trafficking and in ciliogenesis. Required also to maintain a functional transition zone. Functionally, acts as a negative regulator of the Toll-like and IL-1R receptor signaling pathways. Inhibits the MAP3K7-induced NF-kappa-B activation pathway. Inhibits MAP3K7 phosphorylation at 'Thr-184' and 'Thr-187' upon Il-1 beta stimulation. The sequence is that of Cytoplasmic dynein 2 intermediate chain 2 from Homo sapiens (Human).